Consider the following 224-residue polypeptide: 7-cyano-7-deazaguanine synthase (224 aa).

An ATP-binding site is contributed by 10 to 20; sequence LSGGLDSATVV. Zn(2+) is bound by residues Cys-189, Cys-199, Cys-202, and Cys-205.

This sequence belongs to the QueC family. Zn(2+) serves as cofactor.

The enzyme catalyses 7-carboxy-7-deazaguanine + NH4(+) + ATP = 7-cyano-7-deazaguanine + ADP + phosphate + H2O + H(+). It participates in purine metabolism; 7-cyano-7-deazaguanine biosynthesis. Functionally, catalyzes the ATP-dependent conversion of 7-carboxy-7-deazaguanine (CDG) to 7-cyano-7-deazaguanine (preQ(0)). The protein is 7-cyano-7-deazaguanine synthase of Stutzerimonas stutzeri (strain A1501) (Pseudomonas stutzeri).